Reading from the N-terminus, the 96-residue chain is MKEVLMRIYSSKEENLEDYINKLFEGGIRGAVVLQGIAGFGKGREFHSEEIEVLSYELPVVIEVVEDREKLLNFLKENRETFKNCYITFERVKVWE.

Belongs to the UPF0166 family.

This chain is UPF0166 protein aq_448, found in Aquifex aeolicus (strain VF5).